The sequence spans 388 residues: Large ribosomal subunit protein uL3B (388 aa).

The span at Met1–Arg10 shows a compositional bias: basic and acidic residues. Positions Met1–Lys34 are disordered. Over residues Pro18 to Ala31 the composition is skewed to basic residues.

Belongs to the universal ribosomal protein uL3 family. In terms of assembly, component of the large ribosomal subunit (LSU). Mature yeast ribosomes consist of a small (40S) and a large (60S) subunit. The 40S small subunit contains 1 molecule of ribosomal RNA (18S rRNA) and at least 33 different proteins. The large 60S subunit contains 3 rRNA molecules (25S, 5.8S and 5S rRNA) and at least 46 different proteins. uL3 forms together with ES39L one of the contact sites for the signal recognition particle that targets ribosomes to the endoplasmic reticulum membrane.

The protein resides in the cytoplasm. In terms of biological role, component of the ribosome, a large ribonucleoprotein complex responsible for the synthesis of proteins in the cell. The small ribosomal subunit (SSU) binds messenger RNAs (mRNAs) and translates the encoded message by selecting cognate aminoacyl-transfer RNA (tRNA) molecules. The large subunit (LSU) contains the ribosomal catalytic site termed the peptidyl transferase center (PTC), which catalyzes the formation of peptide bonds, thereby polymerizing the amino acids delivered by tRNAs into a polypeptide chain. The nascent polypeptides leave the ribosome through a tunnel in the LSU and interact with protein factors that function in enzymatic processing, targeting, and the membrane insertion of nascent chains at the exit of the ribosomal tunnel. uL3 plays a role in coordinating processes of accommodating the aminoacyl-tRNA in the PTC. This chain is Large ribosomal subunit protein uL3B (rpl302), found in Schizosaccharomyces pombe (strain 972 / ATCC 24843) (Fission yeast).